The sequence spans 407 residues: Phospholipase A1-II 7 (407 aa).

Catalysis depends on Ser230, which acts as the Acyl-ester intermediate. Active-site charge relay system residues include Ser230, Asp299, and His336.

Belongs to the AB hydrolase superfamily. Lipase family.

It is found in the cytoplasm. In terms of biological role, acylhydrolase that catalyzes the hydrolysis of phospholipids at the sn-1 position. This is Phospholipase A1-II 7 from Oryza sativa subsp. indica (Rice).